The chain runs to 591 residues: Heterogeneous nuclear ribonucleoprotein L-like (591 aa).

Residues 1–120 form a disordered region; sequence MSSSSSSSPK…STEGGGSHHK (120 aa). Residues 20-31 show a composition bias toward basic and acidic residues; it reads FESQAKRLKTEE. Lys-28 is covalently cross-linked (Glycyl lysine isopeptide (Lys-Gly) (interchain with G-Cter in SUMO2)). Ser-37 is modified (phosphoserine). Thr-48 carries the post-translational modification Phosphothreonine. Residues 57 to 73 are compositionally biased toward gly residues; the sequence is SGGGDGGDGDGGSGGGG. Positions 74–91 are enriched in acidic residues; sequence DGEEGEGGEEGDEGDGDE. A compositionally biased stretch (gly residues) spans 92-105; the sequence is GGSGGDEGGSGGGP. 3 positions are modified to phosphoserine: Ser-107, Ser-117, and Ser-124. RRM domains lie at 125 to 199, 215 to 293, and 384 to 458; these read PVVH…YSTS, NKVL…YARP, and SVVM…VSKQ. Residue Lys-540 forms a Glycyl lysine isopeptide (Lys-Gly) (interchain with G-Cter in SUMO2) linkage.

As to quaternary structure, interacts with HNRNPL.

RNA-binding protein that functions as a regulator of alternative splicing for multiple target mRNAs, including PTPRC/CD45 and STAT5A. Required for alternative splicing of PTPRC. The polypeptide is Heterogeneous nuclear ribonucleoprotein L-like (Hnrnpll) (Mus musculus (Mouse)).